The chain runs to 177 residues: Probable prophage lysozyme (177 aa).

E35 (proton donor) is an active-site residue. Catalysis depends on D44, which acts as the Nucleophile.

The protein belongs to the glycosyl hydrolase 24 family.

The enzyme catalyses Hydrolysis of (1-&gt;4)-beta-linkages between N-acetylmuramic acid and N-acetyl-D-glucosamine residues in a peptidoglycan and between N-acetyl-D-glucosamine residues in chitodextrins.. Its function is as follows. Essential for lysis of bacterial cell wall, by showing cell wall hydrolyzing activity. This Escherichia coli (strain K12) protein is Probable prophage lysozyme (rrrQ).